Consider the following 193-residue polypeptide: Imidazoleglycerol-phosphate dehydratase (193 aa).

Belongs to the imidazoleglycerol-phosphate dehydratase family.

The protein resides in the cytoplasm. The enzyme catalyses D-erythro-1-(imidazol-4-yl)glycerol 3-phosphate = 3-(imidazol-4-yl)-2-oxopropyl phosphate + H2O. It functions in the pathway amino-acid biosynthesis; L-histidine biosynthesis; L-histidine from 5-phospho-alpha-D-ribose 1-diphosphate: step 6/9. This chain is Imidazoleglycerol-phosphate dehydratase, found in Staphylococcus carnosus (strain TM300).